The sequence spans 382 residues: Leucoanthocyanidin reductase (382 aa).

Residues 19–25 (GGTGFIG), arginine 44, and lysine 52 each bind NADP(+). Residue lysine 142 is the Proton acceptor of the active site. Arginine 146 provides a ligand contact to NADP(+).

Belongs to the NmrA-type oxidoreductase family. Isoflavone reductase subfamily. Monomer.

The catalysed reaction is (2R,3S)-catechin + NADP(+) + H2O = (2R,3S,4S)-leucocyanidin + NADPH + H(+). It participates in flavonoid metabolism; proanthocyanidin biosynthesis. In terms of biological role, catalyzes the synthesis of catechin from 3,4-cis-leucocyanidin. Also synthesizes afzelechin and gallocatechin. The polypeptide is Leucoanthocyanidin reductase (LAR) (Desmodium uncinatum (Silverleaf Spanish clover)).